The sequence spans 164 residues: V-type proton ATPase 16 kDa proteolipid subunit (164 aa).

Residues 1 to 9 lie on the Lumenal side of the membrane; it reads MASFSGDET. A helical transmembrane segment spans residues 10–32; that stretch reads APFFGFLGAAAALVFSCMGAAYG. Topologically, residues 33-54 are cytoplasmic; it reads TAKSGVGVASMGVMRPELVMKS. Residues 55–75 traverse the membrane as a helical segment; it reads IVPVVMAGVLGIYGLIIAVII. Topologically, residues 76-94 are lumenal; the sequence is STGINPKAKSYYLFDGYAH. Residues 95-116 traverse the membrane as a helical segment; sequence LSSGLACGLAGLSAGMAIGIVG. At 117–128 the chain is on the cytoplasmic side; the sequence is DAGVRANAQQPK. A helical transmembrane segment spans residues 129–154; the sequence is LFVGMILILIFAEALALYGLIVGIIL. Over 155-164 the chain is Lumenal; it reads SSRAGQSRAD.

This sequence belongs to the V-ATPase proteolipid subunit family. V-ATPase is a heteromultimeric enzyme composed of a peripheral catalytic V1 complex (main components: subunits A, B, C, D, E, and F) attached to an integral membrane V0 proton pore complex (main component: the proteolipid protein; which is present as a hexamer that forms the proton-conducting pore).

The protein localises to the vacuole membrane. Functionally, proton-conducting pore forming subunit of the membrane integral V0 complex of vacuolar ATPase. V-ATPase is responsible for acidifying a variety of intracellular compartments in eukaryotic cells. This chain is V-type proton ATPase 16 kDa proteolipid subunit, found in Vigna radiata var. radiata (Mung bean).